A 156-amino-acid polypeptide reads, in one-letter code: UPF0756 membrane protein Exig_2210 (156 aa).

5 consecutive transmembrane segments (helical) span residues 5–25, 52–72, 83–103, 109–129, and 131–151; these read LFLI…LIIA, WGVT…DIGF, IGII…HGVG, PLVT…FRGV, and VGPL…DIIV.

Belongs to the UPF0756 family.

The protein resides in the cell membrane. This chain is UPF0756 membrane protein Exig_2210, found in Exiguobacterium sibiricum (strain DSM 17290 / CCUG 55495 / CIP 109462 / JCM 13490 / 255-15).